The chain runs to 332 residues: UDP-N-acetylenolpyruvoylglucosamine reductase (332 aa).

The FAD-binding PCMH-type domain occupies 55-221 (VGGAADLYVA…TQATLQLAPG (167 aa)). Arginine 200 is an active-site residue. The active-site Proton donor is serine 251. Residue glutamate 321 is part of the active site.

Belongs to the MurB family. FAD is required as a cofactor.

The protein resides in the cytoplasm. The catalysed reaction is UDP-N-acetyl-alpha-D-muramate + NADP(+) = UDP-N-acetyl-3-O-(1-carboxyvinyl)-alpha-D-glucosamine + NADPH + H(+). It functions in the pathway cell wall biogenesis; peptidoglycan biosynthesis. In terms of biological role, cell wall formation. This chain is UDP-N-acetylenolpyruvoylglucosamine reductase, found in Nostoc punctiforme (strain ATCC 29133 / PCC 73102).